We begin with the raw amino-acid sequence, 399 residues long: Putative cytochrome P450 133B2 (399 aa).

A heme-binding site is contributed by cysteine 348.

Belongs to the cytochrome P450 family. The cofactor is heme.

This Xylella fastidiosa (strain Temecula1 / ATCC 700964) protein is Putative cytochrome P450 133B2 (cyp133B2).